We begin with the raw amino-acid sequence, 138 residues long: Large ribosomal subunit protein bL17 (138 aa).

The protein belongs to the bacterial ribosomal protein bL17 family. In terms of assembly, part of the 50S ribosomal subunit. Contacts protein L32.

This Methylorubrum extorquens (strain PA1) (Methylobacterium extorquens) protein is Large ribosomal subunit protein bL17.